The chain runs to 1097 residues: Transmembrane protein 132D (1097 aa).

Residues 1-30 (MCPSEMGTLWYLWSPVLISLAALFSKVTEG) form the signal peptide. The Extracellular portion of the chain corresponds to 31 to 913 (RGILESIQRF…PDQAAKGLSD (883 aa)). The span at 233–245 (DERGDCAKEDSRK) shows a compositional bias: basic and acidic residues. Disordered stretches follow at residues 233 to 263 (DERG…SPPL) and 885 to 906 (SFPD…DPDQ). Residues 914 to 934 (LEIGMYALLGVFCLAILVFLI) traverse the membrane as a helical segment. The Cytoplasmic segment spans residues 935–1097 (NCVTFALKYR…SCMERLHEHV (163 aa)). A disordered region spans residues 1021 to 1042 (MLTDDKEQKSEPPTSPTSKRKR).

This sequence belongs to the TMEM132 family. In terms of tissue distribution, expressed in mature oligodendrocytes in the brain.

It localises to the membrane. Functionally, regulates neuronal morphology via inhibition of the WAVE regulatory complex (WCR), a complex that controls F-actin cytoskeletal dynamics. The sequence is that of Transmembrane protein 132D (Tmem132d) from Rattus norvegicus (Rat).